Here is a 383-residue protein sequence, read N- to C-terminus: Succinyl-diaminopimelate desuccinylase (383 aa).

H79 is a binding site for Zn(2+). D81 is an active-site residue. D110 is a binding site for Zn(2+). Residue E141 is the Proton acceptor of the active site. Residues E142, E170, and H355 each contribute to the Zn(2+) site.

The protein belongs to the peptidase M20A family. DapE subfamily. Homodimer. It depends on Zn(2+) as a cofactor. Co(2+) serves as cofactor.

It catalyses the reaction N-succinyl-(2S,6S)-2,6-diaminopimelate + H2O = (2S,6S)-2,6-diaminopimelate + succinate. The protein operates within amino-acid biosynthesis; L-lysine biosynthesis via DAP pathway; LL-2,6-diaminopimelate from (S)-tetrahydrodipicolinate (succinylase route): step 3/3. Catalyzes the hydrolysis of N-succinyl-L,L-diaminopimelic acid (SDAP), forming succinate and LL-2,6-diaminopimelate (DAP), an intermediate involved in the bacterial biosynthesis of lysine and meso-diaminopimelic acid, an essential component of bacterial cell walls. This chain is Succinyl-diaminopimelate desuccinylase, found in Helicobacter pylori (strain P12).